Here is a 969-residue protein sequence, read N- to C-terminus: Exoribonuclease II, mitochondrial (969 aa).

Residues M1–K41 constitute a mitochondrion transit peptide. The span at R28 to Q38 shows a compositional bias: basic residues. Residues R28–Q54 form a disordered region. Residues A40–D51 are compositionally biased toward basic and acidic residues. The RNB domain occupies R522 to Q853.

This sequence belongs to the RNR ribonuclease family. In terms of assembly, MSU1 and SUV3 are the two components of the mitochondrial degradosome (mtEXO).

The protein resides in the mitochondrion matrix. It catalyses the reaction Exonucleolytic cleavage in the 3'- to 5'-direction to yield nucleoside 5'-phosphates.. Its function is as follows. Essential for mitochondrial biogenesis. Functionally, required for intron-independent turnover and processing of mitochondrial RNA. Participates in 3' mtRNA processing where it hydrolyzes single-stranded RNA or partially double-stranded RNA with 3' single-stranded tails. In Saccharomyces cerevisiae (strain ATCC 204508 / S288c) (Baker's yeast), this protein is Exoribonuclease II, mitochondrial (DSS1).